A 188-amino-acid chain; its full sequence is Xanthine phosphoribosyltransferase (188 aa).

Leucine 20 and asparagine 27 together coordinate xanthine. 5-phospho-alpha-D-ribose 1-diphosphate is bound at residue 127–131 (AHGEA). Lysine 155 contacts xanthine.

Belongs to the purine/pyrimidine phosphoribosyltransferase family. Xpt subfamily. In terms of assembly, homodimer.

It localises to the cytoplasm. The enzyme catalyses XMP + diphosphate = xanthine + 5-phospho-alpha-D-ribose 1-diphosphate. It functions in the pathway purine metabolism; XMP biosynthesis via salvage pathway; XMP from xanthine: step 1/1. Its function is as follows. Converts the preformed base xanthine, a product of nucleic acid breakdown, to xanthosine 5'-monophosphate (XMP), so it can be reused for RNA or DNA synthesis. This chain is Xanthine phosphoribosyltransferase, found in Heliobacterium modesticaldum (strain ATCC 51547 / Ice1).